The sequence spans 745 residues: Arf-GAP with coiled-coil, ANK repeat and PH domain-containing protein 1 (745 aa).

One can recognise a BAR domain in the interval 1–226 (MTVKLDFEEC…RKELGGQLHQ (226 aa)). The segment at 1 to 382 (MTVKLDFEEC…RGLGQGSGHL (382 aa)) is required for formation of endosomal tubules when overexpressed with PIP5K1C. One can recognise a PH domain in the interval 265-360 (GLVMEGHLFK…WVSAVQSSIA (96 aa)). Residues 405–527 (GHVAAQVQSV…KFLTKLPEIR (123 aa)) enclose the Arf-GAP domain. Residues 405–745 (GHVAAQVQSV…SRRSHDLHTL (341 aa)) are required for interaction with GULP1. The C4-type zinc finger occupies 420–443 (CCDCREPAPEWASINLGVTLCIQC). 3'-nitrotyrosine is present on Y485. The prevents interaction with ITGB1 when S-554 is not phosphorylated stretch occupies residues 525-567 (EIRGRRGGRGPPRGHPPVPPKPGLIRPKPGSFRSKPEPPSEDL). The tract at residues 525 to 569 (EIRGRRGGRGPPRGHPPVPPKPGLIRPKPGSFRSKPEPPSEDLQS) is disordered. Residues 537-546 (RGHPPVPPKP) show a composition bias toward pro residues. At S555 the chain carries Phosphoserine; by PKB. ANK repeat units follow at residues 607–640 (ENAT…NVNQ), 644–673 (QGRG…DLGV), and 677–707 (EGRD…EADA).

As to quaternary structure, banana-shaped homodimer laterally assembling into tetramers, the tetramers further pack helically onto the membrane. Interacts with GTP-bound ARF6. Interacts with third cytoplasmic loop of SLC2A4/GLUT4. Interacts with CLTC. Interacts with GULP1. Forms a complex with GDP-bound ARF6 and GULP1. Interacts with ITGB1; required for ITGB1 recycling. Phosphorylation at Ser-555 by PKB is required for interaction with ITGB1, export of ITGB1 from recycling endosomes to the cell surface and ITGB1-dependent cell migration.

Its subcellular location is the recycling endosome membrane. GAP activity stimulated by phosphatidylinositol 4,5-bisphosphate (PIP2) and phosphatidic acid. Its function is as follows. GTPase-activating protein (GAP) for ADP ribosylation factor 6 (ARF6) required for clathrin-dependent export of proteins from recycling endosomes to trans-Golgi network and cell surface. Required for regulated export of ITGB1 from recycling endosomes to the cell surface and ITGB1-dependent cell migration. The sequence is that of Arf-GAP with coiled-coil, ANK repeat and PH domain-containing protein 1 (ACAP1) from Bos taurus (Bovine).